The following is a 2432-amino-acid chain: uncharacterized protein (2432 aa).

This sequence belongs to the IIV-6 261R/396L/443R family.

This is an uncharacterized protein from Invertebrate iridescent virus 6 (IIV-6).